The primary structure comprises 529 residues: GTPase Obg (529 aa).

In terms of domain architecture, Obg spans 2–159 (ASFVDRVVLH…SDIVLELKSI (158 aa)). Positions 160–343 (ADIALVGFPS…LGFAMAEIVK (184 aa)) constitute an OBG-type G domain. Residues 166 to 173 (GFPSAGKS), 191 to 195 (FTTLI), 212 to 215 (DVPG), 295 to 298 (NKVD), and 324 to 326 (SAT) contribute to the GTP site. Positions 173 and 193 each coordinate Mg(2+). One can recognise an OCT domain in the interval 363–447 (PRAVNEAGFK…DDGVVFDWEP (85 aa)). Basic and acidic residues predominate over residues 466–502 (FADIGDRPTRGQKRDEQQERRDAKAAARAELEAERKA). A disordered region spans residues 466-529 (FADIGDRPTR…ESGLTTENEE (64 aa)).

This sequence belongs to the TRAFAC class OBG-HflX-like GTPase superfamily. OBG GTPase family. As to quaternary structure, monomer. Mg(2+) serves as cofactor.

It is found in the cytoplasm. Its function is as follows. An essential GTPase which binds GTP, GDP and possibly (p)ppGpp with moderate affinity, with high nucleotide exchange rates and a fairly low GTP hydrolysis rate. Plays a role in control of the cell cycle, stress response, ribosome biogenesis and in those bacteria that undergo differentiation, in morphogenesis control. The chain is GTPase Obg from Arthrobacter sp. (strain FB24).